The sequence spans 603 residues: MDTKDFKRLEKMYSPRYLPGLDGLRAFAVIGIIIYHLNAQWLSGGFLGVDTFFVISGYLITSLLISEYYRTQKIDLLEFWKRRLKRLIPAVLFLICVVLTFTLIFKPELIIQMKRDAIAAIFYVSNWWYISQNVDYFNQFAIEPLKHLWSLAIEEQFYLLFPLVITFLLHRFKPRNIIQTLFIVSLISLGLMIVIHFITGDNSRVYFGTDTRLQTLLLGCILAFIWPPFALKKDISKKIVVSLDIIGISGFAVLMTLFFIVGDQDQWIYNGGFYIISFATLFIIAIAVHPSSLFAKFLSMKPLLIIGKRSYSLYLWHYPIIVFVNSYYVQGQIPVYVYIIEILLTALMAEISYRFIETPIRKKGFKAFAFLPKKKSQFARTVLVILLLIPSIIVLSGQFDALGKQHEAEKKEKKTEFKTTKKKVVKKDKQEDKQTANSKEDIKKSSPLLIGDSVMVDIGNVFTKKIPNAQIDGKVGRQLVDATPIVKSQYKDYAKKGQKVVVELGTNGAFTKDQLNELLDSFGKADIYLVSIRVPRDYEGRINKLIYEAAEKRSNVHLVDWYKASAGHPEYFAYDGIHLEYAGSKALTDLIVKTMETHATNKK.

The next 11 helical transmembrane spans lie at 17–37 (YLPG…IYHL), 45–65 (GFLG…SLLI), 87–107 (LIPA…IFKP), 148–168 (LWSL…ITFL), 177–197 (IIQT…VIHF), 211–231 (TRLQ…PFAL), 239–259 (IVVS…TLFF), 268–288 (IYNG…AIAV), 311–331 (YSLY…YVQG), 333–353 (IPVY…EISY), and 382–402 (VLVI…FDAL). Residues S453, D575, and H578 contribute to the active site.

Belongs to the acyltransferase 3 family.

The protein localises to the cell membrane. In terms of biological role, responsible for O-acetylation at the C(6)-hydroxyl group of N-acetylmuramyl residues, forming the corresponding N,6-O-diacetylmuramic acid of the peptidoglycan. O-acetylation of the peptidoglycan is the major determinant for lysozyme resistance. In Staphylococcus aureus (strain MRSA252), this protein is O-acetyltransferase OatA (oatA).